A 165-amino-acid chain; its full sequence is Ubiquitin-like protein ISG15 (165 aa).

2 consecutive Ubiquitin-like domains span residues 2 to 78 (GWDL…VDKC) and 79 to 157 (DEPL…LRGG). Cys78 carries the S-nitrosocysteine; alternate modification. An LRLRGG motif is present at residues 152 to 157 (LRLRGG). The involved in the ligation of specific target proteins stretch occupies residues 153–157 (RLRGG). Gly157 is covalently cross-linked (Glycyl lysine isopeptide (Gly-Lys) (interchain with K-? in acceptor proteins)). Residues 158 to 165 (GTEPGGRS) constitute a propeptide, removed in mature form.

In terms of assembly, homodimer; disulfide-linked. Interacts with, and is conjugated to its targets by UBE1L (E1 enzyme) and UBE2E2 (E2 enzyme). Interacts with NEDD4. Interacts with PARP12; this interaction inhibits PINK1/Parkin-dependent mitophagy. (Microbial infection) Interacts with vaccinia virus protein E3. As to quaternary structure, (Microbial infection) Interaction with influenza B NS1 protein inhibits its conjugation. In terms of assembly, (Microbial infection) Interacts (via C-terminus) with Crimean-Congo hemorrhagic fever virus (CCHFV) RNA-directed RNA polymerase L (via N-terminus); the deISGylase activity of the viral protein interferes with antiviral signaling pathways mediated by NF-kappaB and IRF signalings. (Microbial infection) Interacts with human cytomegalovirus protein UL26; this interaction inhibits global protein ISGylation. S-nitrosylation decreases its dimerization, thereby increasing the availability as well as the solubility of monomeric ISG15 for its conjugation to cellular proteins. Post-translationally, induced as an inactive, precursor protein that is cleaved by specific proteases to expose the C-terminal diglycine (LRLRGG) motif. This motif is essential not only for its conjugation to substrates but also for its recognition by the relevant processing proteases. In terms of tissue distribution, detected in lymphoid cells, striated and smooth muscle, several epithelia and neurons. Expressed in neutrophils, monocytes and lymphocytes. Enhanced expression seen in pancreatic adenocarcinoma, endometrial cancer, and bladder cancer, as compared to non-cancerous tissue. In bladder cancer, the increase in expression exhibits a striking positive correlation with more advanced stages of the disease.

It localises to the cytoplasm. Its subcellular location is the secreted. Ubiquitin-like protein which plays a key role in the innate immune response to viral infection either via its conjugation to a target protein (ISGylation) or via its action as a free or unconjugated protein. ISGylation involves a cascade of enzymatic reactions involving E1, E2, and E3 enzymes which catalyze the conjugation of ISG15 to a lysine residue in the target protein. Its target proteins include IFIT1, MX1/MxA, PPM1B, UBE2L6, UBA7, CHMP5, CHMP2A, CHMP4B and CHMP6. Isgylation of the viral sensor IFIH1/MDA5 promotes IFIH1/MDA5 oligomerization and triggers activation of innate immunity against a range of viruses, including coronaviruses, flaviviruses and picornaviruses. Can also isgylate: EIF2AK2/PKR which results in its activation, RIGI which inhibits its function in antiviral signaling response, EIF4E2 which enhances its cap structure-binding activity and translation-inhibition activity, UBE2N and UBE2E1 which negatively regulates their activity, IRF3 which inhibits its ubiquitination and degradation and FLNB which prevents its ability to interact with the upstream activators of the JNK cascade thereby inhibiting IFNA-induced JNK signaling. Exhibits antiviral activity towards both DNA and RNA viruses, including influenza A, HIV-1 and Ebola virus. Restricts HIV-1 and ebola virus via disruption of viral budding. Inhibits the ubiquitination of HIV-1 Gag and host TSG101 and disrupts their interaction, thereby preventing assembly and release of virions from infected cells. Inhibits Ebola virus budding mediated by the VP40 protein by disrupting ubiquitin ligase activity of NEDD4 and its ability to ubiquitinate VP40. ISGylates influenza A virus NS1 protein which causes a loss of function of the protein and the inhibition of virus replication. The secreted form of ISG15 can: induce natural killer cell proliferation, act as a chemotactic factor for neutrophils and act as a IFN-gamma-inducing cytokine playing an essential role in antimycobacterial immunity. The secreted form acts through the integrin ITGAL/ITGB2 receptor to initiate activation of SRC family tyrosine kinases including LYN, HCK and FGR which leads to secretion of IFNG and IL10; the interaction is mediated by ITGAL. This chain is Ubiquitin-like protein ISG15, found in Homo sapiens (Human).